A 169-amino-acid polypeptide reads, in one-letter code: Large ribosomal subunit protein uL10 (169 aa).

This sequence belongs to the universal ribosomal protein uL10 family. In terms of assembly, part of the ribosomal stalk of the 50S ribosomal subunit. The N-terminus interacts with L11 and the large rRNA to form the base of the stalk. The C-terminus forms an elongated spine to which L12 dimers bind in a sequential fashion forming a multimeric L10(L12)X complex.

Its function is as follows. Forms part of the ribosomal stalk, playing a central role in the interaction of the ribosome with GTP-bound translation factors. In Rickettsia africae (strain ESF-5), this protein is Large ribosomal subunit protein uL10.